The following is a 278-amino-acid chain: Phosphatidylglycerol--prolipoprotein diacylglyceryl transferase (278 aa).

The next 4 membrane-spanning stretches (helical) occupy residues 18–38 (IQVH…TILA), 55–75 (LILW…VIFE), 90–110 (WDGG…VYLF), and 115–135 (WIPV…AQGI). R137 contributes to the a 1,2-diacyl-sn-glycero-3-phospho-(1'-sn-glycerol) binding site. The next 3 membrane-spanning stretches (helical) occupy residues 177 to 197 (QPTF…LMSL), 207 to 227 (GEVF…VEGM), and 237 to 257 (IRVS…ILVF).

It belongs to the Lgt family.

It localises to the cell membrane. The enzyme catalyses L-cysteinyl-[prolipoprotein] + a 1,2-diacyl-sn-glycero-3-phospho-(1'-sn-glycerol) = an S-1,2-diacyl-sn-glyceryl-L-cysteinyl-[prolipoprotein] + sn-glycerol 1-phosphate + H(+). It participates in protein modification; lipoprotein biosynthesis (diacylglyceryl transfer). Functionally, catalyzes the transfer of the diacylglyceryl group from phosphatidylglycerol to the sulfhydryl group of the N-terminal cysteine of a prolipoprotein, the first step in the formation of mature lipoproteins. The sequence is that of Phosphatidylglycerol--prolipoprotein diacylglyceryl transferase from Pediococcus pentosaceus (strain ATCC 25745 / CCUG 21536 / LMG 10740 / 183-1w).